Consider the following 79-residue polypeptide: MPVAVGPYGQSQPSCFDRVKMGFVMGCAVGMAAGALFGPFSCLRIGMRGRELMGGIGKTMMQSGGTFGPFMAIGMGIRC.

A helical membrane pass occupies residues 22–44; that stretch reads GFVMGCAVGMAAGALFGPFSCLR. Residues 42–60 form a sufficient for antibacterial activity region; that stretch reads CLRIGMRGRELMGGIGKTM.

Belongs to the MGR2 family.

It is found in the mitochondrion inner membrane. Functionally, has antibacterial activity against a variety of bacteria including S.aureus, P.aeruginosa and M.tuberculosis. Acts by inducing bacterial membrane breakage. Its function is as follows. Induces production of reactive oxygen species (ROS) which are necessary for cell proliferation. May play a role in inducing oxidative DNA damage and replicative senescence. May play a role in the coordination of mitochondrial morphology and cell proliferation. In Sus scrofa (Pig), this protein is Reactive oxygen species modulator 1 (ROMO1).